The primary structure comprises 74 residues: Anaphase-promoting complex subunit 13 (74 aa).

The tract at residues Leu-33–Lys-56 is disordered.

This sequence belongs to the APC13 family. In terms of assembly, the mammalian APC/C is composed at least of 14 distinct subunits ANAPC1, ANAPC2, CDC27/APC3, ANAPC4, ANAPC5, CDC16/APC6, ANAPC7, CDC23/APC8, ANAPC10, ANAPC11, CDC26/APC12, ANAPC13, ANAPC15 and ANAPC16 that assemble into a complex of at least 19 chains with a combined molecular mass of around 1.2 MDa; APC/C interacts with FZR1 and FBXO5.

Its subcellular location is the nucleus. Its pathway is protein modification; protein ubiquitination. Component of the anaphase promoting complex/cyclosome (APC/C), a cell cycle-regulated E3 ubiquitin ligase that controls progression through mitosis and the G1 phase of the cell cycle. The APC/C complex acts by mediating ubiquitination and subsequent degradation of target proteins: it mainly mediates the formation of 'Lys-11'-linked polyubiquitin chains and, to a lower extent, the formation of 'Lys-48'- and 'Lys-63'-linked polyubiquitin chains. The APC/C complex catalyzes assembly of branched 'Lys-11'-/'Lys-48'-linked branched ubiquitin chains on target proteins. This Mus musculus (Mouse) protein is Anaphase-promoting complex subunit 13 (Anapc13).